The sequence spans 276 residues: Diaminopimelate epimerase (276 aa).

Substrate contacts are provided by N13, Q46, and N66. The active-site Proton donor is C75. Substrate is bound by residues 76–77 (GN), N159, N192, and 210–211 (ER). The active-site Proton acceptor is C219. 220-221 (GT) lines the substrate pocket.

The protein belongs to the diaminopimelate epimerase family. As to quaternary structure, homodimer.

It is found in the cytoplasm. The enzyme catalyses (2S,6S)-2,6-diaminopimelate = meso-2,6-diaminopimelate. It functions in the pathway amino-acid biosynthesis; L-lysine biosynthesis via DAP pathway; DL-2,6-diaminopimelate from LL-2,6-diaminopimelate: step 1/1. Its function is as follows. Catalyzes the stereoinversion of LL-2,6-diaminopimelate (L,L-DAP) to meso-diaminopimelate (meso-DAP), a precursor of L-lysine and an essential component of the bacterial peptidoglycan. The protein is Diaminopimelate epimerase of Teredinibacter turnerae (strain ATCC 39867 / T7901).